Reading from the N-terminus, the 1070-residue chain is Inactive tyrosine-protein kinase 7 (1070 aa).

The N-terminal stretch at 1–30 is a signal peptide; the sequence is MGAARGSPARPRRLPLLSVLLLPLLGGTQT. Ig-like C2-type domains are found at residues 31–120, 128–218, 225–317, 309–407, 412–497, 503–586, and 578–680; these read AIVF…ASFN, PVVL…FTLS, ARVV…EATL, PPII…VNIT, PSWL…ARVQ, KFTP…HVQL, and GQIR…APLY. The Extracellular portion of the chain corresponds to 31–704; it reads AIVFIKQPSS…SPPPYKMIQT (674 aa). A disulfide bridge connects residues cysteine 53 and cysteine 101. Residues asparagine 116, asparagine 175, asparagine 184, asparagine 214, asparagine 268, and asparagine 283 are each glycosylated (N-linked (GlcNAc...) asparagine). An intrachain disulfide couples cysteine 150 to cysteine 200. Disulfide bonds link cysteine 246/cysteine 301 and cysteine 343/cysteine 391. N-linked (GlcNAc...) asparagine glycosylation is found at asparagine 405, asparagine 463, asparagine 567, and asparagine 646. 3 cysteine pairs are disulfide-bonded: cysteine 433-cysteine 481, cysteine 524-cysteine 570, and cysteine 613-cysteine 664. The helical transmembrane segment at 705–725 threads the bilayer; it reads IGLSVGAAVAYIIAVLGLMFY. At 726-1070 the chain is on the cytoplasmic side; sequence CKKRCKAKRL…LGDSTVDSKP (345 aa). 2 disordered regions span residues 736–759 and 773–793; these read QKQPEGEEPEMECLNGGPLQNGQP and GSGPAATNKRHSTSDKMHFPR. The tract at residues 794 to 1070 is interaction with CTNNB1; that stretch reads SSLQPITTLG…LGDSTVDSKP (277 aa). Positions 796-1066 constitute a Protein kinase; inactive domain; that stretch reads LQPITTLGKS…IASALGDSTV (271 aa). Serine 1064 is subject to Phosphoserine.

Belongs to the protein kinase superfamily. Tyr protein kinase family. Insulin receptor subfamily. Interacts with CTNNB1. MMP14 cleaves PTK7 between Pro-621 and Leu-622 generating an N-terminal soluble (70 kDa) fragment and a membrane C-terminal (50 kDa) fragment. Proteolysis by MMP14 regulates PTK7 function in non-canonical Wnt signaling pathway. As to expression, highly expressed in lung, liver, pancreas, kidney, placenta and melanocytes. Weakly expressed in thyroid gland, ovary, brain, heart and skeletal muscle. Also expressed in erythroleukemia cells. But not expressed in colon.

It is found in the membrane. Its subcellular location is the cell junction. Functionally, inactive tyrosine kinase involved in Wnt signaling pathway. Component of both the non-canonical (also known as the Wnt/planar cell polarity signaling) and the canonical Wnt signaling pathway. Functions in cell adhesion, cell migration, cell polarity, proliferation, actin cytoskeleton reorganization and apoptosis. Has a role in embryogenesis, epithelial tissue organization and angiogenesis. The polypeptide is Inactive tyrosine-protein kinase 7 (PTK7) (Homo sapiens (Human)).